The following is a 334-amino-acid chain: Leucine carboxyl methyltransferase 1 (334 aa).

S-adenosyl-L-methionine-binding positions include K37, R73, G98, D122, 171–172, and E198; that span reads DL.

This sequence belongs to the methyltransferase superfamily. LCMT family.

The enzyme catalyses [phosphatase 2A protein]-C-terminal L-leucine + S-adenosyl-L-methionine = [phosphatase 2A protein]-C-terminal L-leucine methyl ester + S-adenosyl-L-homocysteine. In terms of biological role, methylates the carboxyl group of the C-terminal leucine residue of protein phosphatase 2A catalytic subunits to form alpha-leucine ester residues. In Homo sapiens (Human), this protein is Leucine carboxyl methyltransferase 1 (LCMT1).